The following is a 348-amino-acid chain: Anthranilate phosphoribosyltransferase (348 aa).

Residues Gly89, Gly92 to Asp93, Thr97, Asn99 to Thr102, Lys117 to Ser125, and Ser129 each bind 5-phospho-alpha-D-ribose 1-diphosphate. Gly89 is a binding site for anthranilate. Residue Ser101 participates in Mg(2+) binding. Residue Asn120 coordinates anthranilate. Residue Arg175 participates in anthranilate binding. The Mg(2+) site is built by Asp234 and Glu235.

It belongs to the anthranilate phosphoribosyltransferase family. Homodimer. The cofactor is Mg(2+).

It catalyses the reaction N-(5-phospho-beta-D-ribosyl)anthranilate + diphosphate = 5-phospho-alpha-D-ribose 1-diphosphate + anthranilate. The protein operates within amino-acid biosynthesis; L-tryptophan biosynthesis; L-tryptophan from chorismate: step 2/5. Catalyzes the transfer of the phosphoribosyl group of 5-phosphorylribose-1-pyrophosphate (PRPP) to anthranilate to yield N-(5'-phosphoribosyl)-anthranilate (PRA). The protein is Anthranilate phosphoribosyltransferase of Synechocystis sp. (strain ATCC 27184 / PCC 6803 / Kazusa).